We begin with the raw amino-acid sequence, 98 residues long: Ubiquitin-related modifier 1 (98 aa).

Glycine 98 bears the 1-thioglycine mark. A Glycyl lysine isopeptide (Gly-Lys) (interchain with K-? in acceptor proteins) cross-link involves residue glycine 98.

It belongs to the URM1 family. In terms of processing, C-terminal thiocarboxylation occurs in 2 steps, it is first acyl-adenylated (-COAMP) via the hesA/moeB/thiF part of UBA4, then thiocarboxylated (-COSH) via the rhodanese domain of UBA4.

The protein resides in the cytoplasm. Its pathway is tRNA modification; 5-methoxycarbonylmethyl-2-thiouridine-tRNA biosynthesis. Its function is as follows. Acts as a sulfur carrier required for 2-thiolation of mcm(5)S(2)U at tRNA wobble positions of cytosolic tRNA(Lys), tRNA(Glu) and tRNA(Gln). Serves as sulfur donor in tRNA 2-thiolation reaction by being thiocarboxylated (-COSH) at its C-terminus by the MOCS3 homolog UBA4. The sulfur is then transferred to tRNA to form 2-thiolation of mcm(5)S(2)U. Prior mcm(5) tRNA modification by the elongator complex is required for 2-thiolation. Also acts as a ubiquitin-like protein (UBL) that is covalently conjugated via an isopeptide bond to lysine residues of target proteins such as AHP1. The thiocarboxylated form serves as substrate for conjugation and oxidative stress specifically induces the formation of UBL-protein conjugates. This chain is Ubiquitin-related modifier 1, found in Candida glabrata (strain ATCC 2001 / BCRC 20586 / JCM 3761 / NBRC 0622 / NRRL Y-65 / CBS 138) (Yeast).